A 465-amino-acid chain; its full sequence is Glutamate--tRNA ligase (465 aa).

Residues Pro-11 to Gly-21 carry the 'HIGH' region motif. The 'KMSKS' region signature appears at Lys-243–Arg-247. Lys-246 serves as a coordination point for ATP.

It belongs to the class-I aminoacyl-tRNA synthetase family. Glutamate--tRNA ligase type 1 subfamily. As to quaternary structure, monomer.

The protein resides in the cytoplasm. The enzyme catalyses tRNA(Glu) + L-glutamate + ATP = L-glutamyl-tRNA(Glu) + AMP + diphosphate. Catalyzes the attachment of glutamate to tRNA(Glu) in a two-step reaction: glutamate is first activated by ATP to form Glu-AMP and then transferred to the acceptor end of tRNA(Glu). This is Glutamate--tRNA ligase from Aromatoleum aromaticum (strain DSM 19018 / LMG 30748 / EbN1) (Azoarcus sp. (strain EbN1)).